Reading from the N-terminus, the 540-residue chain is Glucose-6-phosphate isomerase (540 aa).

Catalysis depends on glutamate 351, which acts as the Proton donor. Catalysis depends on residues histidine 382 and lysine 506.

Belongs to the GPI family.

It is found in the cytoplasm. It catalyses the reaction alpha-D-glucose 6-phosphate = beta-D-fructose 6-phosphate. The protein operates within carbohydrate biosynthesis; gluconeogenesis. It functions in the pathway carbohydrate degradation; glycolysis; D-glyceraldehyde 3-phosphate and glycerone phosphate from D-glucose: step 2/4. In terms of biological role, catalyzes the reversible isomerization of glucose-6-phosphate to fructose-6-phosphate. The chain is Glucose-6-phosphate isomerase from Corynebacterium glutamicum (strain R).